The primary structure comprises 635 residues: Early transcription factor 70 kDa subunit (635 aa).

Residues 32–185 (RSIIDENKSV…SNIISLMSDE (154 aa)) enclose the Helicase ATP-binding domain. Residue 45–52 (HIMGSGKT) coordinates ATP. The DEXH box motif lies at 135 to 138 (DEAH). Residues 326–505 (KFKYFINKIE…TLPFDIKKLL (180 aa)) form the Helicase C-terminal domain.

It belongs to the helicase family. VETF subfamily. Heterodimer of a 70 kDa and a 82 kDa subunit. Part of the early transcription complex composed of ETF, RAP94, and the DNA-directed RNA polymerase.

The protein resides in the virion. Acts with RNA polymerase to initiate transcription from early gene promoters. Is recruited by the RPO-associated protein of 94 kDa (RAP94) to form the early transcription complex, which also contains the core RNA polymerase. ETF heterodimer binds to early gene promoters. The protein is Early transcription factor 70 kDa subunit (VETFS) of Oryctolagus cuniculus (Rabbit).